An 897-amino-acid polypeptide reads, in one-letter code: 3'-5' exonuclease DinG (897 aa).

Residues 8–161 (VVDLETTGNQ…DEDAATTAKL (154 aa)) enclose the Exonuclease domain. Residues 241–496 (SKAVDQLGLT…KAIDQLEKQR (256 aa)) enclose the Helicase ATP-binding domain. ATP is bound at residue 276-283 (ASLGSGKS). The DEAH box motif lies at 448–451 (DEAH). A Helicase C-terminal domain is found at 703 to 893 (NIDEYVASIV…QFGKLLRQIQ (191 aa)).

The protein belongs to the helicase family. DinG subfamily. Type 2 sub-subfamily.

In terms of biological role, 3'-5' exonuclease. This Staphylococcus aureus (strain MSSA476) protein is 3'-5' exonuclease DinG.